The primary structure comprises 275 residues: Ribosomal RNA small subunit methyltransferase A (275 aa).

Positions 28, 30, 55, 77, 103, and 123 each coordinate S-adenosyl-L-methionine.

This sequence belongs to the class I-like SAM-binding methyltransferase superfamily. rRNA adenine N(6)-methyltransferase family. RsmA subfamily.

Its subcellular location is the cytoplasm. It catalyses the reaction adenosine(1518)/adenosine(1519) in 16S rRNA + 4 S-adenosyl-L-methionine = N(6)-dimethyladenosine(1518)/N(6)-dimethyladenosine(1519) in 16S rRNA + 4 S-adenosyl-L-homocysteine + 4 H(+). In terms of biological role, specifically dimethylates two adjacent adenosines (A1518 and A1519) in the loop of a conserved hairpin near the 3'-end of 16S rRNA in the 30S particle. May play a critical role in biogenesis of 30S subunits. In Rhizobium etli (strain CIAT 652), this protein is Ribosomal RNA small subunit methyltransferase A.